We begin with the raw amino-acid sequence, 350 residues long: RING finger protein 44 (350 aa).

The segment at 298–339 adopts an RING-type; atypical zinc-finger fold; sequence CVVCFSDFEVRQLLRVLPCNHEFHAKCVDKWLKANRTCPICR.

This chain is RING finger protein 44 (Rnf44), found in Rattus norvegicus (Rat).